Reading from the N-terminus, the 290-residue chain is Membrane protein insertase YidC (290 aa).

Positions 1–19 are cleaved as a signal peptide; the sequence is MKKKTLLPLFLGIMVFLAG. Cys-20 is lipidated: N-palmitoyl cysteine. The S-diacylglycerol cysteine moiety is linked to residue Cys-20. 5 helical membrane passes run 56–76, 134–154, 176–196, 207–224, and 229–251; these read YGLAIIILVLVIRIILLPFML, MLGCLPMLIQLPIIMGLYFVL, PDIWITIIAGVLYFIQAYVSS, GYMMMVISPIMIIWISLS, and LGLYWSVSAAFLVVQTHFANIYY. The segment at 270 to 290 is disordered; the sequence is HNGGSNKKGKNTQVVSKKKKK.

Belongs to the OXA1/ALB3/YidC family. Type 2 subfamily.

Its subcellular location is the cell membrane. Functionally, required for the insertion and/or proper folding and/or complex formation of integral membrane proteins into the membrane. Involved in integration of membrane proteins that insert both dependently and independently of the Sec translocase complex, as well as at least some lipoproteins. The polypeptide is Membrane protein insertase YidC (Staphylococcus aureus (strain MRSA252)).